Here is a 270-residue protein sequence, read N- to C-terminus: MFAPRLLDFQKTKYARFMNHRVPAHKRYQPTEYEHAANCATHAFWIIPSILGSSNLYFLSDDDWETISAWIYGLGLCGLFVVSTVFHTISWKKSHLRMVEHCLHMFDRMVIYFFIAASYAPWLNLRELGPWASHMRWLVWIMASVGTIYVFFFHERTGSCVQFLRGEACPKAGTACLPARYKLVELLCYVVMGFFPALVILSMPNTEGIWELVTGGVFYCLGMVFFKSDGRIPFAHAIWHLFVAFGAGTHYYAIWRYLYLPSTLQTKVSK.

Residues 1-38 are Cytoplasmic-facing; sequence MFAPRLLDFQKTKYARFMNHRVPAHKRYQPTEYEHAAN. The chain crosses the membrane as a helical span at residues 39–59; it reads CATHAFWIIPSILGSSNLYFL. Residues 60–65 lie on the Lumenal side of the membrane; sequence SDDDWE. A helical transmembrane segment spans residues 66 to 86; that stretch reads TISAWIYGLGLCGLFVVSTVF. Topologically, residues 87–102 are cytoplasmic; it reads HTISWKKSHLRMVEHC. A helical membrane pass occupies residues 103 to 123; sequence LHMFDRMVIYFFIAASYAPWL. Topologically, residues 124-132 are lumenal; the sequence is NLRELGPWA. A helical membrane pass occupies residues 133 to 153; that stretch reads SHMRWLVWIMASVGTIYVFFF. The Cytoplasmic portion of the chain corresponds to 154-182; sequence HERTGSCVQFLRGEACPKAGTACLPARYK. A helical membrane pass occupies residues 183–203; that stretch reads LVELLCYVVMGFFPALVILSM. Residues 204 to 205 are Lumenal-facing; it reads PN. The helical transmembrane segment at 206 to 226 threads the bilayer; it reads TEGIWELVTGGVFYCLGMVFF. The Cytoplasmic portion of the chain corresponds to 227–233; that stretch reads KSDGRIP. A helical membrane pass occupies residues 234–254; the sequence is FAHAIWHLFVAFGAGTHYYAI. The Lumenal segment spans residues 255–270; it reads WRYLYLPSTLQTKVSK.

The protein belongs to the ADIPOR family. In terms of tissue distribution, shows restricted expression with highest levels in brain and testis.

The protein resides in the golgi apparatus membrane. The sequence is that of Monocyte to macrophage differentiation factor 2 from Homo sapiens (Human).